Consider the following 625-residue polypeptide: DNA mismatch repair protein MutL (625 aa).

Residues 404–427 (PPPRNAPQSTGMPSMAGTGLPATS) are disordered.

It belongs to the DNA mismatch repair MutL/HexB family.

This protein is involved in the repair of mismatches in DNA. It is required for dam-dependent methyl-directed DNA mismatch repair. May act as a 'molecular matchmaker', a protein that promotes the formation of a stable complex between two or more DNA-binding proteins in an ATP-dependent manner without itself being part of a final effector complex. In Xanthomonas oryzae pv. oryzae (strain MAFF 311018), this protein is DNA mismatch repair protein MutL.